A 696-amino-acid polypeptide reads, in one-letter code: Elongation factor G 2 (696 aa).

The region spanning 5–281 is the tr-type G domain; that stretch reads SKYRNIGIFA…AVVDYLPSPT (277 aa). GTP-binding positions include 14 to 21, 78 to 82, and 132 to 135; these read AHVDAGKT, DTPGH, and NKLD.

Belongs to the TRAFAC class translation factor GTPase superfamily. Classic translation factor GTPase family. EF-G/EF-2 subfamily.

The protein localises to the cytoplasm. Its function is as follows. Catalyzes the GTP-dependent ribosomal translocation step during translation elongation. During this step, the ribosome changes from the pre-translocational (PRE) to the post-translocational (POST) state as the newly formed A-site-bound peptidyl-tRNA and P-site-bound deacylated tRNA move to the P and E sites, respectively. Catalyzes the coordinated movement of the two tRNA molecules, the mRNA and conformational changes in the ribosome. The polypeptide is Elongation factor G 2 (Vibrio parahaemolyticus serotype O3:K6 (strain RIMD 2210633)).